Consider the following 357-residue polypeptide: UDP-N-acetylglucosamine--N-acetylmuramyl-(pentapeptide) pyrophosphoryl-undecaprenol N-acetylglucosamine transferase (357 aa).

UDP-N-acetyl-alpha-D-glucosamine contacts are provided by residues 15–17, Asn-125, Ser-190, and Gln-290; that span reads SGG.

The protein belongs to the glycosyltransferase 28 family. MurG subfamily.

The protein resides in the cell inner membrane. The enzyme catalyses di-trans,octa-cis-undecaprenyl diphospho-N-acetyl-alpha-D-muramoyl-L-alanyl-D-glutamyl-meso-2,6-diaminopimeloyl-D-alanyl-D-alanine + UDP-N-acetyl-alpha-D-glucosamine = di-trans,octa-cis-undecaprenyl diphospho-[N-acetyl-alpha-D-glucosaminyl-(1-&gt;4)]-N-acetyl-alpha-D-muramoyl-L-alanyl-D-glutamyl-meso-2,6-diaminopimeloyl-D-alanyl-D-alanine + UDP + H(+). It participates in cell wall biogenesis; peptidoglycan biosynthesis. Cell wall formation. Catalyzes the transfer of a GlcNAc subunit on undecaprenyl-pyrophosphoryl-MurNAc-pentapeptide (lipid intermediate I) to form undecaprenyl-pyrophosphoryl-MurNAc-(pentapeptide)GlcNAc (lipid intermediate II). The polypeptide is UDP-N-acetylglucosamine--N-acetylmuramyl-(pentapeptide) pyrophosphoryl-undecaprenol N-acetylglucosamine transferase (Chlamydia pneumoniae (Chlamydophila pneumoniae)).